The sequence spans 344 residues: Cyclin-dependent kinase 20 (344 aa).

The 285-residue stretch at 4-288 (YSILGRIGEG…ARQALLHPYF (285 aa)) folds into the Protein kinase domain. Residues 10–18 (IGEGAHGIV) and lysine 33 contribute to the ATP site. Catalysis depends on aspartate 127, which acts as the Proton acceptor.

The protein belongs to the protein kinase superfamily. CMGC Ser/Thr protein kinase family. CDC2/CDKX subfamily. In terms of assembly, monomer. Interacts with tbc1d32.

The protein localises to the nucleus. The protein resides in the cytoplasm. It localises to the cell projection. Its subcellular location is the cilium. The enzyme catalyses L-seryl-[protein] + ATP = O-phospho-L-seryl-[protein] + ADP + H(+). It carries out the reaction L-threonyl-[protein] + ATP = O-phospho-L-threonyl-[protein] + ADP + H(+). Functionally, involved in cell growth. Activates cdk2, a kinase involved in the control of the cell cycle, by phosphorylating residue 'Thr-160'. Required for high-level Shh responses in the developing neural tube. Together with tbc1d32, controls the structure of the primary cilium by coordinating assembly of the ciliary membrane and axoneme, allowing gli2 to be properly activated in response to SHH signaling. This is Cyclin-dependent kinase 20 (cdk20) from Danio rerio (Zebrafish).